Consider the following 117-residue polypeptide: Putative membrane protein insertion efficiency factor (117 aa).

It belongs to the UPF0161 family.

The protein resides in the cell inner membrane. In terms of biological role, could be involved in insertion of integral membrane proteins into the membrane. This chain is Putative membrane protein insertion efficiency factor, found in Bartonella bacilliformis (strain ATCC 35685 / KC583 / Herrer 020/F12,63).